A 275-amino-acid chain; its full sequence is Large ribosomal subunit protein uL2 (275 aa).

The segment at 223 to 275 is disordered; it reads VAMNPVDHPHGGGEGRTSGGRHPVTPWGVPTKGYKTRSNKRTDKYIVRRRNKK.

It belongs to the universal ribosomal protein uL2 family. As to quaternary structure, part of the 50S ribosomal subunit. Forms a bridge to the 30S subunit in the 70S ribosome.

One of the primary rRNA binding proteins. Required for association of the 30S and 50S subunits to form the 70S ribosome, for tRNA binding and peptide bond formation. It has been suggested to have peptidyltransferase activity; this is somewhat controversial. Makes several contacts with the 16S rRNA in the 70S ribosome. This is Large ribosomal subunit protein uL2 from Shewanella loihica (strain ATCC BAA-1088 / PV-4).